Consider the following 149-residue polypeptide: Probable ubiquitin-conjugating enzyme E2 W (149 aa).

Residues 4 to 149 form the UBC core domain; the sequence is RYAKRLQKEL…VRWMFHDDTV (146 aa). The Glycyl thioester intermediate role is filled by Cys88.

This sequence belongs to the ubiquitin-conjugating enzyme family.

The enzyme catalyses S-ubiquitinyl-[E1 ubiquitin-activating enzyme]-L-cysteine + [E2 ubiquitin-conjugating enzyme]-L-cysteine = [E1 ubiquitin-activating enzyme]-L-cysteine + S-ubiquitinyl-[E2 ubiquitin-conjugating enzyme]-L-cysteine.. It carries out the reaction S-ubiquitinyl-[E1 ubiquitin-activating enzyme]-L-cysteine + [acceptor protein]-N-terminal-amino acid = [E1 ubiquitin-activating enzyme]-L-cysteine + N-terminal-ubiquitinyl-[acceptor protein].. Its pathway is protein modification; protein ubiquitination. Functionally, catalyzes the covalent attachment of ubiquitin to other proteins. The sequence is that of Probable ubiquitin-conjugating enzyme E2 W (ube2w) from Dictyostelium discoideum (Social amoeba).